The chain runs to 101 residues: MHGKYPTLKDIVLELTPDPVGLHCNEQLDSSEDEVDEQATQATQATQHSTLLQCYQILTSCSKCCSNVRLVVECTGPDIHDLHDLLLGTLNIVCPLCAPKS.

The E7 terminal domain stretch occupies residues 1-40 (MHGKYPTLKDIVLELTPDPVGLHCNEQLDSSEDEVDEQAT). Positions 22-26 (LHCNE) match the LXCXE motif; interaction with host RB1 and TMEM173/STING motif. Residues 61 to 97 (CSKCCSNVRLVVECTGPDIHDLHDLLLGTLNIVCPLC) fold into a zinc finger. A Nuclear export signal motif is present at residues 79–87 (IHDLHDLLL).

This sequence belongs to the papillomaviridae E7 protein family. In terms of assembly, homodimer. Homooligomer. Interacts with host RB1; this interaction induces dissociation of RB1-E2F1 complex thereby disrupting RB1 activity. Interacts with host EP300; this interaction represses EP300 transcriptional activity. Interacts with protein E2; this interaction inhibits E7 oncogenic activity. Interacts with host TMEM173/STING; this interaction impairs the ability of TMEM173/STING to sense cytosolic DNA and promote the production of type I interferon (IFN-alpha and IFN-beta). Post-translationally, highly phosphorylated.

The protein localises to the host cytoplasm. It is found in the host nucleus. Its function is as follows. Plays a role in viral genome replication by driving entry of quiescent cells into the cell cycle. Stimulation of progression from G1 to S phase allows the virus to efficiently use the cellular DNA replicating machinery to achieve viral genome replication. E7 protein has both transforming and trans-activating activities. Induces the disassembly of the E2F1 transcription factor from RB1, with subsequent transcriptional activation of E2F1-regulated S-phase genes. Interferes with host histone deacetylation mediated by HDAC1 and HDAC2, leading to transcription activation. Also plays a role in the inhibition of both antiviral and antiproliferative functions of host interferon alpha. Interaction with host TMEM173/STING impairs the ability of TMEM173/STING to sense cytosolic DNA and promote the production of type I interferon (IFN-alpha and IFN-beta). The polypeptide is Protein E7 (Human papillomavirus 13).